We begin with the raw amino-acid sequence, 210 residues long: Oligoribonuclease (210 aa).

The Exonuclease domain maps to 12 to 177 (LVWIDLEMTG…ADIVESIREL (166 aa)). Tyrosine 134 is a catalytic residue.

The protein belongs to the oligoribonuclease family.

The protein resides in the cytoplasm. Its function is as follows. 3'-to-5' exoribonuclease specific for small oligoribonucleotides. The protein is Oligoribonuclease of Corynebacterium diphtheriae (strain ATCC 700971 / NCTC 13129 / Biotype gravis).